The following is a 241-amino-acid chain: E3 ubiquitin-protein ligase RNF166 (241 aa).

The segment at 8-30 is disordered; sequence VASSQHRQHHSHQSLATPSSADS. Residues 37-77 form an RING-type zinc finger; it reads CPICLEVYYKPVAIGSCGHTFCGECLQPCLQVSSPLCPLCR. 4 residues coordinate Zn(2+): C102, C105, H117, and C121. A C2HC RNF-type zinc finger spans residues 102–121; the sequence is CRGCSKKVTLAKMRAHISSC. The UIM domain maps to 225-241; sequence DEEAALQAALALSLSEN.

Its subcellular location is the cytoplasm. It catalyses the reaction S-ubiquitinyl-[E2 ubiquitin-conjugating enzyme]-L-cysteine + [acceptor protein]-L-lysine = [E2 ubiquitin-conjugating enzyme]-L-cysteine + N(6)-ubiquitinyl-[acceptor protein]-L-lysine.. The protein operates within protein modification; protein ubiquitination. Functionally, E3 ubiquitin-protein ligase that promotes the ubiquitination of different substrates. The protein is E3 ubiquitin-protein ligase RNF166 (rnf166) of Xenopus laevis (African clawed frog).